The following is a 184-amino-acid chain: Phosphorelay intermediate protein YPD1 (184 aa).

Positions 30 to 125 (EEGFSKSLVE…SAENVAVNDG (96 aa)) constitute an HPt domain. Position 69 is a phosphohistidine (H69). The tract at residues 120-152 (VAVNDGETNPENGSNGNETSNNKTNTSNIPDES) is disordered. Positions 125-147 (GETNPENGSNGNETSNNKTNTSN) are enriched in low complexity.

This sequence belongs to the YPD1 family.

It localises to the cytoplasm. The protein localises to the nucleus. Phosphorelay intermediate protein that is part of the bifurcated SLN1-YPD1-SKN7/SSK1 two-component regulatory system, which controls activity of the HOG1 pathway and gene expression in response to oxidative stress and probably to changes in the osmolarity of the extracellular environment. Catalyzes the phosphoryl group transfer from the membrane-bound histidine kinase SLN1 to two distinct response regulators SSK1 and SKN7. The sequence is that of Phosphorelay intermediate protein YPD1 (YPD1) from Candida albicans (strain SC5314 / ATCC MYA-2876) (Yeast).